A 475-amino-acid polypeptide reads, in one-letter code: Ribulose bisphosphate carboxylase large chain (475 aa).

A propeptide spanning residues 1-2 (MS) is cleaved from the precursor. Residue proline 3 is modified to N-acetylproline. The substrate site is built by asparagine 123 and threonine 173. Lysine 175 (proton acceptor) is an active-site residue. Lysine 177 lines the substrate pocket. Residues lysine 201, aspartate 203, and glutamate 204 each coordinate Mg(2+). Residue lysine 201 is modified to N6-carboxylysine. Histidine 294 (proton acceptor) is an active-site residue. Residues arginine 295, histidine 327, and serine 379 each contribute to the substrate site.

Belongs to the RuBisCO large chain family. Type I subfamily. In terms of assembly, heterohexadecamer of 8 large chains and 8 small chains; disulfide-linked. The disulfide link is formed within the large subunit homodimers. Mg(2+) serves as cofactor. In terms of processing, the disulfide bond which can form in the large chain dimeric partners within the hexadecamer appears to be associated with oxidative stress and protein turnover.

It localises to the plastid. The protein localises to the chloroplast. It catalyses the reaction 2 (2R)-3-phosphoglycerate + 2 H(+) = D-ribulose 1,5-bisphosphate + CO2 + H2O. It carries out the reaction D-ribulose 1,5-bisphosphate + O2 = 2-phosphoglycolate + (2R)-3-phosphoglycerate + 2 H(+). In terms of biological role, ruBisCO catalyzes two reactions: the carboxylation of D-ribulose 1,5-bisphosphate, the primary event in carbon dioxide fixation, as well as the oxidative fragmentation of the pentose substrate in the photorespiration process. Both reactions occur simultaneously and in competition at the same active site. The protein is Ribulose bisphosphate carboxylase large chain of Gnetum parvifolium (Small-leaved jointfir).